The following is a 465-amino-acid chain: MLPLVALVGRPNVGKSTLFNALTLTRDALVHDQPGVTRDRHYGVCRIDGQPLFAVVDTGGMVGKEDGLAGATARQARLAAAEADVVLFVVNVREGASALDDDILAWLRKLSQPTLLVINKIDGVSDTTVHSEFAHYGFSDVVPVSAAHRQGLDDLIEQVLAWLPERSIGEALNEDSERIHIAFVGRPNVGKSTLVNRLLGEERMIVSDVPGTTRDSITVDLERDEFRYRLVDTAGLRRKSKVEEAVEKFSAFKTLQAIEQCQVAVLLLDAGEGVTDQDATVLAAILDAGKALVVAMNKWDGLATYQREQAEDLLSRKLGFVNWAEVVRLSAKHGSGLRELFRAIHRAHVSALRQFSTSEVNKALEIAYQTAPPPSIRGYVSKLRYVHPAGSNPPTFIVHGTRLKVLPDTYKRYLENFFRKRFKLVGTPVRFLFREGDNPYEGKKNVLSERQIQRRRRLMRHVKRK.

EngA-type G domains follow at residues 3–167 and 179–352; these read PLVA…PERS and IHIA…VSAL. GTP is bound by residues 9–16, 57–61, 119–122, 185–192, 232–236, and 297–300; these read GRPNVGKS, DTGGM, NKID, DTAGL, and NKWD. Positions 353–437 constitute a KH-like domain; the sequence is RQFSTSEVNK…PVRFLFREGD (85 aa).

This sequence belongs to the TRAFAC class TrmE-Era-EngA-EngB-Septin-like GTPase superfamily. EngA (Der) GTPase family. In terms of assembly, associates with the 50S ribosomal subunit.

GTPase that plays an essential role in the late steps of ribosome biogenesis. This is GTPase Der from Xylella fastidiosa (strain M12).